We begin with the raw amino-acid sequence, 343 residues long: Aldehyde reductase 2 (343 aa).

NADP(+) is bound at residue Tyr177.

The protein belongs to the NAD(P)-dependent epimerase/dehydratase family. Dihydroflavonol-4-reductase subfamily. Monomer.

It catalyses the reaction a primary alcohol + NADP(+) = an aldehyde + NADPH + H(+). Inhibited by quercetin and diphenylhydantoin. Its function is as follows. Catalyzes the asymmetric reduction of o-substituted aliphatic and aromatic aldehydes and ketones to an S-enantiomer. Reduces ethyl 4-chloro-3-oxobutanoate to ethyl (S)-4-chloro-3-hydroxybutanoate. This Sporidiobolus salmonicolor (Yeast-like fungus) protein is Aldehyde reductase 2.